A 459-amino-acid polypeptide reads, in one-letter code: Anthocyanidin 3-O-glucoside 2''-O-glucosyltransferase (459 aa).

The active-site Proton acceptor is the His20. Position 20 (His20) interacts with an anthocyanidin. The Charge relay role is filled by Asp117. 7 residues coordinate UDP-alpha-D-glucose: Thr138, Val335, Gln337, His352, Trp355, Ser357, and Glu360. Gly375 provides a ligand contact to an anthocyanidin. 2 residues coordinate UDP-alpha-D-glucose: Asp376 and Gln377.

This sequence belongs to the UDP-glycosyltransferase family. In terms of tissue distribution, mainly expressed in the petals and tubes of flower buds at around 24 hours before flower opening.

It carries out the reaction an anthocyanidin 3-O-beta-D-glucoside + UDP-alpha-D-glucose = an anthocyanidin 3-O-sophoroside + UDP + 2 H(+). It participates in pigment biosynthesis; anthocyanin biosynthesis. Its function is as follows. Glycosyltransferase that mediates the glucosylation of anthocyanidin 3-O-glucosides to yield anthocyanidin 3-O-sophorosides. 3-O-sophoroside derivatives are required for the bright blue or red color of flowers. This chain is Anthocyanidin 3-O-glucoside 2''-O-glucosyltransferase (3GGT), found in Ipomoea nil (Japanese morning glory).